The chain runs to 189 residues: MTIKSDKWIRRMAMEHGMIEPFEPNQVKHAPDGHKIVSYGTSSYGYDIRCSDEFKLFTNINSAIVDPKNFDSNSFVDVKSNICLIPPNSFALARTVEYFRIPRNVLTICLGKSTYARCGIIVNVTPFEPEWEGFVTLEFSNTTPLPAKIYANEGVAQVIFFESDEICETSYKDRGGKYQGQHGVTLPKI.

Residues 112-117 (KSTYAR), 136-138 (TLE), Q157, Y171, and Q181 each bind dCTP. The Proton donor/acceptor role is filled by E138.

Belongs to the dCTP deaminase family. Homotrimer.

It carries out the reaction dCTP + H2O + H(+) = dUTP + NH4(+). Its pathway is pyrimidine metabolism; dUMP biosynthesis; dUMP from dCTP (dUTP route): step 1/2. Catalyzes the deamination of dCTP to dUTP. In Nitrosospira multiformis (strain ATCC 25196 / NCIMB 11849 / C 71), this protein is dCTP deaminase.